We begin with the raw amino-acid sequence, 71 residues long: Omega-conotoxin-like CnVIIF (71 aa).

3 disulfides stabilise this stretch: cysteine 46–cysteine 61, cysteine 53–cysteine 65, and cysteine 60–cysteine 70. A Cysteine amide; in CnVIID modification is found at cysteine 70.

It belongs to the conotoxin M superfamily. As to expression, expressed by the venom duct.

It is found in the secreted. Its function is as follows. Omega-conotoxins act at presynaptic membranes, they bind and block voltage-gated calcium channels (Cav). This chain is Omega-conotoxin-like CnVIIF, found in Conus consors (Singed cone).